The sequence spans 471 residues: Putative multidrug resistance protein MdtD (471 aa).

Topologically, residues Met-1–Gln-11 are periplasmic. A helical membrane pass occupies residues Leu-12–Ala-32. Over Leu-33–His-48 the chain is Cytoplasmic. Residues Met-49 to Ala-69 traverse the membrane as a helical segment. Residues Asp-70 to Asn-76 are Periplasmic-facing. A helical membrane pass occupies residues Ile-77–Thr-97. At Leu-98–Leu-101 the chain is on the cytoplasmic side. The chain crosses the membrane as a helical span at residues Leu-102–Met-124. At Lys-125–Thr-137 the chain is on the periplasmic side. Residues Phe-138–Val-158 traverse the membrane as a helical segment. Over Glu-159–His-164 the chain is Cytoplasmic. A helical transmembrane segment spans residues Trp-165–Met-185. At Pro-186 to Asp-196 the chain is on the periplasmic side. The helical transmembrane segment at Leu-197–Ser-217 threads the bilayer. Residues Lys-218–Pro-224 lie on the Cytoplasmic side of the membrane. A helical membrane pass occupies residues Leu-225–Ala-245. Residues Gln-246 to Thr-262 are Periplasmic-facing. A helical membrane pass occupies residues Phe-263–Met-283. The Cytoplasmic segment spans residues Thr-284 to Pro-285. The chain crosses the membrane as a helical span at residues Val-286–Met-306. Residues Val-307–Thr-341 are Periplasmic-facing. Residues Leu-342 to Leu-362 form a helical membrane-spanning segment. Residues Gln-363–Ser-395 are Cytoplasmic-facing. The helical transmembrane segment at Met-396–Phe-416 threads the bilayer. Residues Gly-417–Thr-430 are Periplasmic-facing. The chain crosses the membrane as a helical span at residues Val-431–Ala-451. The Cytoplasmic segment spans residues Arg-452 to Gln-471.

The protein belongs to the major facilitator superfamily. TCR/Tet family.

Its subcellular location is the cell inner membrane. The chain is Putative multidrug resistance protein MdtD from Escherichia coli O6:H1 (strain CFT073 / ATCC 700928 / UPEC).